The primary structure comprises 463 residues: Argininosuccinate lyase (463 aa).

The protein belongs to the lyase 1 family. Argininosuccinate lyase subfamily.

It localises to the cytoplasm. It catalyses the reaction 2-(N(omega)-L-arginino)succinate = fumarate + L-arginine. Its pathway is amino-acid biosynthesis; L-arginine biosynthesis; L-arginine from L-ornithine and carbamoyl phosphate: step 3/3. The sequence is that of Argininosuccinate lyase from Bradyrhizobium sp. (strain ORS 278).